The sequence spans 196 residues: Probable signal peptidase I-1 (196 aa).

Topologically, residues 1–16 (MQNSPIPSPWQFIKEN) are cytoplasmic. A helical membrane pass occupies residues 17–35 (IPLLMVALVLALLLRFFVA). Residues 36–196 (EPRYIPSDSM…FVPARTIINT (161 aa)) lie on the Periplasmic side of the membrane. Active-site residues include Ser-44 and Lys-94.

Belongs to the peptidase S26 family.

It localises to the cell membrane. It carries out the reaction Cleavage of hydrophobic, N-terminal signal or leader sequences from secreted and periplasmic proteins.. The sequence is that of Probable signal peptidase I-1 (lepB1) from Synechocystis sp. (strain ATCC 27184 / PCC 6803 / Kazusa).